Consider the following 221-residue polypeptide: Interleukin-12 subunit alpha (221 aa).

The N-terminal stretch at methionine 1–glycine 25 is a signal peptide. 3 cysteine pairs are disulfide-bonded: cysteine 39-cysteine 112, cysteine 66-cysteine 198, and cysteine 87-cysteine 125. Asparagine 95 is a glycosylation site (N-linked (GlcNAc...) asparagine).

This sequence belongs to the IL-6 superfamily. As to quaternary structure, heterodimer with IL12B; disulfide-linked. This heterodimer is known as interleukin IL-12. Heterodimer with EBI3/IL27B; not disulfide-linked. This heterodimer is known as interleukin IL-35. Interacts with NBR1; this interaction promotes IL-12 secretion.

Its subcellular location is the secreted. Functionally, heterodimerizes with IL12B to form the IL-12 cytokine or with EBI3/IL27B to form the IL-35 cytokine. IL-12 is primarily produced by professional antigen-presenting cells (APCs) such as B-cells and dendritic cells (DCs) as well as macrophages and granulocytes and regulates T-cell and natural killer-cell responses, induces the production of interferon-gamma (IFN-gamma), favors the differentiation of T-helper 1 (Th1) cells and is an important link between innate resistance and adaptive immunity. Mechanistically, exerts its biological effects through a receptor composed of IL12R1 and IL12R2 subunits. Binding to the receptor results in the rapid tyrosine phosphorylation of a number of cellular substrates including the JAK family kinases TYK2 and JAK2. In turn, recruited STAT4 gets phosphorylated and translocates to the nucleus where it regulates cytokine/growth factor responsive genes. As part of IL-35, plays essential roles in maintaining the immune homeostasis of the liver microenvironment and also functions as an immune-suppressive cytokine. Mediates biological events through unconventional receptors composed of IL12RB2 and gp130/IL6ST heterodimers or homodimers. Signaling requires the transcription factors STAT1 and STAT4, which form a unique heterodimer that binds to distinct DNA sites. The chain is Interleukin-12 subunit alpha (IL12A) from Bubalus carabanensis (Swamp type water buffalo).